Reading from the N-terminus, the 313-residue chain is Ribosomal RNA small subunit methyltransferase H (313 aa).

S-adenosyl-L-methionine is bound by residues 35–37, Asp55, Phe81, Asp103, and Gln110; that span reads GGH.

The protein belongs to the methyltransferase superfamily. RsmH family.

It is found in the cytoplasm. It carries out the reaction cytidine(1402) in 16S rRNA + S-adenosyl-L-methionine = N(4)-methylcytidine(1402) in 16S rRNA + S-adenosyl-L-homocysteine + H(+). Specifically methylates the N4 position of cytidine in position 1402 (C1402) of 16S rRNA. The protein is Ribosomal RNA small subunit methyltransferase H of Pseudomonas paraeruginosa (strain DSM 24068 / PA7) (Pseudomonas aeruginosa (strain PA7)).